Reading from the N-terminus, the 621-residue chain is uncharacterized protein (621 aa).

Disordered regions lie at residues 92–134 (FRNS…QINQ) and 268–310 (KINH…DDEI). Positions 94–134 (NSSNQSSQSNQVNQSNQSSPSSQISPSSQVNKFNQSSQINQ) are enriched in low complexity. The segment covering 296-310 (TNDETNDETDNDDEI) has biased composition (acidic residues). Positions 354 to 401 (ANKIQNKIIQIVETLNAYKNKQSQIAIEAKNKIKHITVSNKEVSENIE) form a coiled coil.

This is an uncharacterized protein from Acanthamoeba polyphaga mimivirus (APMV).